The chain runs to 549 residues: Probable protein kinase UbiB (549 aa).

A Protein kinase domain is found at 123–501 (DFNDTPLASA…QQKSHKSNYL (379 aa)). ATP contacts are provided by residues 129–137 (LASASISQV) and Lys152. The active-site Proton acceptor is Asp287. 2 helical membrane passes run 498–518 (SNYLLITSAVLLICGTILFTQ) and 519–539 (IVTLWPAYTCIGAGILIWAIG).

The protein belongs to the ABC1 family. UbiB subfamily.

The protein resides in the cell inner membrane. It functions in the pathway cofactor biosynthesis; ubiquinone biosynthesis [regulation]. Functionally, is probably a protein kinase regulator of UbiI activity which is involved in aerobic coenzyme Q (ubiquinone) biosynthesis. This chain is Probable protein kinase UbiB, found in Shewanella frigidimarina (strain NCIMB 400).